The sequence spans 906 residues: Protein translocase subunit SecA (906 aa).

ATP-binding positions include Q90, G108–T112, and D503. The disordered stretch occupies residues T845 to G882. The span at A846–P862 shows a compositional bias: low complexity. 4 residues coordinate Zn(2+): C890, C892, C901, and H902.

The protein belongs to the SecA family. In terms of assembly, monomer and homodimer. Part of the essential Sec protein translocation apparatus which comprises SecA, SecYEG and auxiliary proteins SecDF-YajC and YidC. It depends on Zn(2+) as a cofactor.

It localises to the cell inner membrane. The protein localises to the cytoplasm. The catalysed reaction is ATP + H2O + cellular proteinSide 1 = ADP + phosphate + cellular proteinSide 2.. Functionally, part of the Sec protein translocase complex. Interacts with the SecYEG preprotein conducting channel. Has a central role in coupling the hydrolysis of ATP to the transfer of proteins into and across the cell membrane, serving both as a receptor for the preprotein-SecB complex and as an ATP-driven molecular motor driving the stepwise translocation of polypeptide chains across the membrane. The sequence is that of Protein translocase subunit SecA from Cereibacter sphaeroides (strain ATCC 17025 / ATH 2.4.3) (Rhodobacter sphaeroides).